The following is a 378-amino-acid chain: MDLGKPMKSVLVVALLVIFQVCLCQDEVTDDYIGDNTTVDYTLFESLCSKKDVRNFKAWFLPIMYSIICFVGLLGNGLVVLTYIYFKRLKTMTDTYLLNLAVADILFLLTLPFWAYSAAKSWVFGVHFCKLIFAIYKMSFFSGMLLLLCISIDRYVAIVQAVSAHRHRARVLLISKLSCVGIWILATVLSIPELLYSDLQRSSSEQAMRCSLITEHVEAFITIQVAQMVIGFLVPLLAMSFCYLVIIRTLLQARNFERNKAIKVIIAVVVVFIVFQLPYNGVVLAQTVANFNITSSTCELSKQLNIAYDVTYSLACVRCCVNPFLYAFIGVKFRNDLFKLFKDLGCLSQEQLRQWSSCRHIRRSSMSVEAETTTTFSP.

The N-terminal stretch at 1–24 (MDLGKPMKSVLVVALLVIFQVCLC) is a signal peptide. Residues 25–59 (QDEVTDDYIGDNTTVDYTLFESLCSKKDVRNFKAW) lie on the Extracellular side of the membrane. N-linked (GlcNAc...) asparagine glycosylation is present at asparagine 36. The chain crosses the membrane as a helical span at residues 60–86 (FLPIMYSIICFVGLLGNGLVVLTYIYF). At 87–95 (KRLKTMTDT) the chain is on the cytoplasmic side. A helical transmembrane segment spans residues 96–116 (YLLNLAVADILFLLTLPFWAY). Topologically, residues 117–130 (SAAKSWVFGVHFCK) are extracellular. Cysteine 129 and cysteine 210 are joined by a disulfide. A helical transmembrane segment spans residues 131–152 (LIFAIYKMSFFSGMLLLLCISI). The Cytoplasmic portion of the chain corresponds to 153–170 (DRYVAIVQAVSAHRHRAR). A helical membrane pass occupies residues 171–191 (VLLISKLSCVGIWILATVLSI). The Extracellular portion of the chain corresponds to 192–219 (PELLYSDLQRSSSEQAMRCSLITEHVEA). A helical transmembrane segment spans residues 220–247 (FITIQVAQMVIGFLVPLLAMSFCYLVII). The Cytoplasmic portion of the chain corresponds to 248 to 263 (RTLLQARNFERNKAIK). A helical membrane pass occupies residues 264–289 (VIIAVVVVFIVFQLPYNGVVLAQTVA). Topologically, residues 290 to 313 (NFNITSSTCELSKQLNIAYDVTYS) are extracellular. A helical membrane pass occupies residues 314 to 331 (LACVRCCVNPFLYAFIGV). Residues 332–378 (KFRNDLFKLFKDLGCLSQEQLRQWSSCRHIRRSSMSVEAETTTTFSP) lie on the Cytoplasmic side of the membrane.

It belongs to the G-protein coupled receptor 1 family. Expressed in various lymphoid tissues and activated B- and T-lymphocytes, strongly up-regulated in B-cells infected with Epstein-Barr virus and T-cells infected with herpesvirus 6 or 7.

It localises to the cell membrane. Its function is as follows. Receptor for the MIP-3-beta chemokine. Probable mediator of EBV effects on B-lymphocytes or of normal lymphocyte functions. The sequence is that of C-C chemokine receptor type 7 (CCR7) from Homo sapiens (Human).